We begin with the raw amino-acid sequence, 404 residues long: Cysteine desulfurase IscS (404 aa).

Pyridoxal 5'-phosphate-binding positions include 75 to 76 (AT), Asn155, Gln183, and 203 to 205 (SAH). At Lys206 the chain carries N6-(pyridoxal phosphate)lysine. Residue Thr243 participates in pyridoxal 5'-phosphate binding. Cys328 functions as the Cysteine persulfide intermediate in the catalytic mechanism. Cys328 lines the [2Fe-2S] cluster pocket.

It belongs to the class-V pyridoxal-phosphate-dependent aminotransferase family. NifS/IscS subfamily. Homodimer. Forms a heterotetramer with IscU, interacts with other sulfur acceptors. The cofactor is pyridoxal 5'-phosphate.

It is found in the cytoplasm. The catalysed reaction is (sulfur carrier)-H + L-cysteine = (sulfur carrier)-SH + L-alanine. The protein operates within cofactor biosynthesis; iron-sulfur cluster biosynthesis. Its function is as follows. Master enzyme that delivers sulfur to a number of partners involved in Fe-S cluster assembly, tRNA modification or cofactor biosynthesis. Catalyzes the removal of elemental sulfur atoms from cysteine to produce alanine. Functions as a sulfur delivery protein for Fe-S cluster synthesis onto IscU, an Fe-S scaffold assembly protein, as well as other S acceptor proteins. The chain is Cysteine desulfurase IscS from Vesicomyosocius okutanii subsp. Calyptogena okutanii (strain HA).